The primary structure comprises 671 residues: Solute carrier family 5 member 4 (671 aa).

At 1–38 (MPAMGTALPRAMASTASVSTSTGSSELSSLSDNINNPA) the chain is on the cytoplasmic side. The helical transmembrane segment at 39-59 (DISVIVIYFVVVMAVGVWAMV) threads the bilayer. Topologically, residues 60–65 (KTNRST) are extracellular. A helical transmembrane segment spans residues 66–86 (VGGFFLAGRSMTWWPMGASLF). At 87 to 89 (ASN) the chain is on the cytoplasmic side. A helical membrane pass occupies residues 90-110 (IGSGHFVGLAGTGAATGIAVT). Residues 111–116 (AFESHS) are Extracellular-facing. Residues 117 to 137 (FALLLVLGWFFVPIYIKAGVM) form a helical membrane-spanning segment. The Cytoplasmic segment spans residues 138 to 159 (TMPEYLRKRFGGKRLQIYLSVL). The chain crosses the membrane as a helical span at residues 160 to 180 (SLFICVILTISADIFSGAIFI). A topological domain (extracellular) is located at residue Lys-181. A helical membrane pass occupies residues 182–202 (LALGLDLYLAIFILLAITAVF). The Cytoplasmic segment spans residues 203 to 218 (TITGGLASVIYTDTLQ). The helical transmembrane segment at 219-239 (AIIMLVGSFILMIYAFVEVGG) threads the bilayer. The Extracellular portion of the chain corresponds to 240–288 (YESFTEKYMNAIPSVVEGDNLTISPKCYTPQPDSFHIFRDAVTGDIPWP). Residues 289–309 (GTAFGMPITALWYWCINQVIV) traverse the membrane as a helical segment. At 310–324 (QRCLCGKNMSHVKAA) the chain is on the cytoplasmic side. Residues 325–345 (CIVCGYLKLLPIFFMVMPGMI) traverse the membrane as a helical segment. Residues 346–378 (SRILYTDMVACVVPSECVKQCGVDVGCTNYAYP) are Extracellular-facing. A helical membrane pass occupies residues 379–399 (MLVLKLMPMGLRGLMLSVMLA). At 400–434 (SLMSSLTSIFNSASTLFTMDLYTKIRKKASERELL) the chain is on the cytoplasmic side. Residues 435 to 455 (IAGRLFVSVLIVTSILWVPIV) traverse the membrane as a helical segment. Residues 456 to 467 (EVSQGGQLIHYT) are Extracellular-facing. The helical transmembrane segment at 468–488 (EAISSYLGPPIAAVFLVAIFC) threads the bilayer. Residues 489–494 (KRVNEQ) are Cytoplasmic-facing. A helical transmembrane segment spans residues 495-515 (GAFWGLMVGLVLGLIRMIAEF). Over 516–537 (SYGTGSCLAPSSCPKVICGVHY) the chain is Extracellular. A helical transmembrane segment spans residues 538-558 (LYYAIILFFVSILVILGVSYL). The Cytoplasmic portion of the chain corresponds to 559 to 650 (TKPIPDVHLY…DTSEKPFWRT (92 aa)). The segment covering 583–593 (DLDAEDREENE) has biased composition (acidic residues). The disordered stretch occupies residues 583 to 604 (DLDAEDREENEADARTEEDQTE). The span at 594-604 (ADARTEEDQTE) shows a compositional bias: basic and acidic residues. The chain crosses the membrane as a helical span at residues 651–671 (VVNVNVIVLLAVAAFFYGYFA).

It belongs to the sodium:solute symporter (SSF) (TC 2.A.21) family.

It localises to the cell membrane. Functionally, generates D-glucose-induced depolarization in a pH-dependent and Na(+)-independent manner, with activity in acidic conditions (pH 5) but not neutral conditions. This chain is Solute carrier family 5 member 4, found in Rattus norvegicus (Rat).